The following is a 142-amino-acid chain: Large ribosomal subunit protein uL13 (142 aa).

The protein belongs to the universal ribosomal protein uL13 family. In terms of assembly, part of the 50S ribosomal subunit.

In terms of biological role, this protein is one of the early assembly proteins of the 50S ribosomal subunit, although it is not seen to bind rRNA by itself. It is important during the early stages of 50S assembly. This Thioalkalivibrio sulfidiphilus (strain HL-EbGR7) protein is Large ribosomal subunit protein uL13.